The chain runs to 256 residues: Small ribosomal subunit protein eS1 (256 aa).

The residue at position 2 (alanine 2) is an N-acetylalanine; partial.

It belongs to the eukaryotic ribosomal protein eS1 family. Component of the small ribosomal subunit. Mature ribosomes consist of a small (40S) and a large (60S) subunit. The 40S subunit contains about 33 different proteins and 1 molecule of RNA (18S). The 60S subunit contains about 49 different proteins and 3 molecules of RNA (25S, 5.8S and 5S).

Its subcellular location is the cytoplasm. The chain is Small ribosomal subunit protein eS1 from Postia placenta (strain ATCC 44394 / Madison 698-R) (Brown rot fungus).